A 259-amino-acid polypeptide reads, in one-letter code: Imidazole glycerol phosphate synthase subunit HisF (259 aa).

Active-site residues include Asp-11 and Asp-130.

Belongs to the HisA/HisF family. As to quaternary structure, heterodimer of HisH and HisF.

The protein resides in the cytoplasm. It carries out the reaction 5-[(5-phospho-1-deoxy-D-ribulos-1-ylimino)methylamino]-1-(5-phospho-beta-D-ribosyl)imidazole-4-carboxamide + L-glutamine = D-erythro-1-(imidazol-4-yl)glycerol 3-phosphate + 5-amino-1-(5-phospho-beta-D-ribosyl)imidazole-4-carboxamide + L-glutamate + H(+). It participates in amino-acid biosynthesis; L-histidine biosynthesis; L-histidine from 5-phospho-alpha-D-ribose 1-diphosphate: step 5/9. Functionally, IGPS catalyzes the conversion of PRFAR and glutamine to IGP, AICAR and glutamate. The HisF subunit catalyzes the cyclization activity that produces IGP and AICAR from PRFAR using the ammonia provided by the HisH subunit. This is Imidazole glycerol phosphate synthase subunit HisF from Desulfovibrio desulfuricans (strain ATCC 27774 / DSM 6949 / MB).